Here is a 201-residue protein sequence, read N- to C-terminus: Histidinol dehydrogenase (201 aa).

It belongs to the histidinol dehydrogenase family. As to quaternary structure, homodimer. Zn(2+) is required as a cofactor.

It catalyses the reaction L-histidinol + 2 NAD(+) + H2O = L-histidine + 2 NADH + 3 H(+). It functions in the pathway amino-acid biosynthesis; L-histidine biosynthesis; L-histidine from 5-phospho-alpha-D-ribose 1-diphosphate: step 9/9. Catalyzes the sequential NAD-dependent oxidations of L-histidinol to L-histidinaldehyde and then to L-histidine. The protein is Histidinol dehydrogenase (hisD) of Buchnera aphidicola subsp. Melaphis rhois.